The primary structure comprises 576 residues: D-lactate dehydrogenase [cytochrome], mitochondrial (576 aa).

The FAD-binding PCMH-type domain occupies 139-320 (EANQRPEIVL…TEATIKCHVR (182 aa)).

Belongs to the FAD-binding oxidoreductase/transferase type 4 family. It depends on FAD as a cofactor. Requires Zn(2+) as cofactor.

The protein resides in the mitochondrion matrix. It carries out the reaction (R)-lactate + 2 Fe(III)-[cytochrome c] = 2 Fe(II)-[cytochrome c] + pyruvate + 2 H(+). Its function is as follows. Catalyzes the stereospecific oxidation of D-lactate to pyruvate. The protein is D-lactate dehydrogenase [cytochrome], mitochondrial (DLD1) of Kluyveromyces lactis (strain ATCC 8585 / CBS 2359 / DSM 70799 / NBRC 1267 / NRRL Y-1140 / WM37) (Yeast).